Here is a 256-residue protein sequence, read N- to C-terminus: Type III pantothenate kinase (256 aa).

Aspartate 6–valine 13 contributes to the ATP binding site. Substrate-binding positions include tyrosine 100 and glycine 107–arginine 110. The active-site Proton acceptor is the aspartate 109. Aspartate 129 serves as a coordination point for K(+). An ATP-binding site is contributed by threonine 132. Threonine 184 lines the substrate pocket.

Belongs to the type III pantothenate kinase family. In terms of assembly, homodimer. Requires NH4(+) as cofactor. The cofactor is K(+).

It localises to the cytoplasm. The catalysed reaction is (R)-pantothenate + ATP = (R)-4'-phosphopantothenate + ADP + H(+). It participates in cofactor biosynthesis; coenzyme A biosynthesis; CoA from (R)-pantothenate: step 1/5. In terms of biological role, catalyzes the phosphorylation of pantothenate (Pan), the first step in CoA biosynthesis. The polypeptide is Type III pantothenate kinase (Geotalea uraniireducens (strain Rf4) (Geobacter uraniireducens)).